We begin with the raw amino-acid sequence, 298 residues long: Probable deoxyhypusine synthase 2 (298 aa).

Residue K259 is the Nucleophile of the active site.

The protein belongs to the deoxyhypusine synthase family. NAD(+) is required as a cofactor.

It catalyses the reaction [eIF5A protein]-L-lysine + spermidine = [eIF5A protein]-deoxyhypusine + propane-1,3-diamine. Its pathway is protein modification; eIF5A hypusination. Its function is as follows. Catalyzes the NAD-dependent oxidative cleavage of spermidine and the subsequent transfer of the butylamine moiety of spermidine to the epsilon-amino group of a specific lysine residue of the eIF-5A precursor protein to form the intermediate deoxyhypusine residue. This chain is Probable deoxyhypusine synthase 2 (dys2), found in Archaeoglobus fulgidus (strain ATCC 49558 / DSM 4304 / JCM 9628 / NBRC 100126 / VC-16).